The primary structure comprises 430 residues: 3-oxo-tetronate kinase (430 aa).

ATP-binding positions include S268, 366 to 369, and G410; that span reads GGET.

The protein belongs to the four-carbon acid sugar kinase family.

It carries out the reaction 3-dehydro-L-erythronate + ATP = 3-dehydro-4-O-phospho-L-erythronate + ADP + H(+). The catalysed reaction is 3-dehydro-D-erythronate + ATP = 3-dehydro-4-O-phospho-D-erythronate + ADP + H(+). Catalyzes the ATP-dependent phosphorylation of 3-oxo-tetronate to 3-oxo-tetronate 4-phosphate. In Pseudomonas fluorescens (strain ATCC BAA-477 / NRRL B-23932 / Pf-5), this protein is 3-oxo-tetronate kinase.